A 66-amino-acid polypeptide reads, in one-letter code: MPKLKTKSGAKKRFKITATGKVIYAQSGKRHGMIKRTNKQIRNLRGTNVMFKSDGDKIIRFFLPNG.

This sequence belongs to the bacterial ribosomal protein bL35 family.

The chain is Large ribosomal subunit protein bL35 from Beijerinckia indica subsp. indica (strain ATCC 9039 / DSM 1715 / NCIMB 8712).